The sequence spans 126 residues: NADH-quinone oxidoreductase subunit A (126 aa).

3 helical membrane-spanning segments follow: residues 14–34 (FLYF…TSWF), 66–86 (FYLI…LYAW), and 96–116 (IGFV…FYLV).

This sequence belongs to the complex I subunit 3 family. NDH-1 is composed of 13 different subunits. Subunits NuoA, H, J, K, L, M, N constitute the membrane sector of the complex.

It localises to the cell membrane. It carries out the reaction a quinone + NADH + 5 H(+)(in) = a quinol + NAD(+) + 4 H(+)(out). Its function is as follows. NDH-1 shuttles electrons from NADH, via FMN and iron-sulfur (Fe-S) centers, to quinones in the respiratory chain. The immediate electron acceptor for the enzyme in this species is believed to be ubiquinone. Couples the redox reaction to proton translocation (for every two electrons transferred, four hydrogen ions are translocated across the cytoplasmic membrane), and thus conserves the redox energy in a proton gradient. This chain is NADH-quinone oxidoreductase subunit A, found in Buchnera aphidicola subsp. Schizaphis graminum (strain Sg).